The primary structure comprises 153 residues: Small ribosomal subunit protein uS13 (153 aa).

Residues 134–153 form a disordered region; it reads GQRTKSNGRRGRSMGVSRKK.

It belongs to the universal ribosomal protein uS13 family.

The protein resides in the cytoplasm. Located at the top of the head of the 40S subunit, it contacts several helices of the 18S rRNA. In Encephalitozoon cuniculi (strain GB-M1) (Microsporidian parasite), this protein is Small ribosomal subunit protein uS13 (RPS18).